Here is a 492-residue protein sequence, read N- to C-terminus: GTPase Der (492 aa).

EngA-type G domains follow at residues 3–167 (PVVA…PAPE) and 188–363 (ICIA…AQYA). GTP contacts are provided by residues 9-16 (GRPNVGKS), 56-60 (DTGGF), 119-122 (NKVE), 194-201 (GRPNVGKS), 241-245 (DTAGI), and 306-309 (NKWD). In terms of domain architecture, KH-like spans 364–448 (YRINTGLLNR…PIRLLFRAKT (85 aa)). A disordered region spans residues 464-492 (VEKKEKKTTRRKKERKEQSRRKRVRDLKG). Positions 469–492 (KKTTRRKKERKEQSRRKRVRDLKG) are enriched in basic residues.

Belongs to the TRAFAC class TrmE-Era-EngA-EngB-Septin-like GTPase superfamily. EngA (Der) GTPase family. In terms of assembly, associates with the 50S ribosomal subunit.

Functionally, GTPase that plays an essential role in the late steps of ribosome biogenesis. In Desulforapulum autotrophicum (strain ATCC 43914 / DSM 3382 / VKM B-1955 / HRM2) (Desulfobacterium autotrophicum), this protein is GTPase Der.